Consider the following 217-residue polypeptide: uncharacterized protein (217 aa).

A disordered region spans residues 1–32 (MTLKKHRGKMSEKSNVNKKFTNSTQNNSNWSN). Residues 22-32 (NSTQNNSNWSN) are compositionally biased toward low complexity.

This is an uncharacterized protein from Acidianus filamentous virus 2 (isolate Italy/Pozzuoli) (AFV-2).